Consider the following 125-residue polypeptide: Transposase for transposon Tn554 (125 aa).

One of three proteins encoded by transposon Tn554 required for its transposition. This is Transposase for transposon Tn554 (tnpC1) from Staphylococcus aureus (strain Mu50 / ATCC 700699).